The following is a 472-amino-acid chain: uncharacterized protein (472 aa).

The next 14 helical transmembrane spans lie at 14-34 (VIVGILLAGAFVAILNQTLLI), 53-73 (WLTTSFMLTNGILIPITAFLI), 80-100 (ALLITAMSIFTAGTVVGAFAP), 113-133 (AAGAGIMMPLMQTVFLTIFPI), 142-162 (MVGLVISFAPAIGPTLSGWAV), 169-189 (SLFYIILPFAVIDLILASILM), 202-222 (ILSVILSTFGFGGLLYGFSSV), 227-247 (WSSSTVLISLLVGVIALLLFI), 263-283 (FTFGVFSLTTLLGTLVFALLI), 302-322 (FDTGLMLLPGAVVMGFMSPII), 333-353 (GLAIAGFCIIFLTSLPFMQLT), 359-379 (AWIVVLYTVRLLGTAMIMMPV), 405-427 (VGGSIGTALLVSVMSNQAAHAGT), and 437-457 (GMNAAFIVAAVIALVGFLLSF).

The protein belongs to the major facilitator superfamily. EmrB family.

It is found in the cell membrane. This is an uncharacterized protein from Bacillus subtilis (strain 168).